Here is a 243-residue protein sequence, read N- to C-terminus: DNA repair protein RecO (243 aa).

This sequence belongs to the RecO family.

Involved in DNA repair and RecF pathway recombination. This Serratia proteamaculans (strain 568) protein is DNA repair protein RecO.